Here is a 256-residue protein sequence, read N- to C-terminus: tRNA-cytidine(32) 2-sulfurtransferase (256 aa).

The PP-loop motif motif lies at 35 to 40 (SGGKDS). Residues Cys-110, Cys-113, and Cys-201 each contribute to the [4Fe-4S] cluster site.

This sequence belongs to the TtcA family. As to quaternary structure, homodimer. Mg(2+) is required as a cofactor. It depends on [4Fe-4S] cluster as a cofactor.

Its subcellular location is the cytoplasm. The enzyme catalyses cytidine(32) in tRNA + S-sulfanyl-L-cysteinyl-[cysteine desulfurase] + AH2 + ATP = 2-thiocytidine(32) in tRNA + L-cysteinyl-[cysteine desulfurase] + A + AMP + diphosphate + H(+). Its pathway is tRNA modification. Functionally, catalyzes the ATP-dependent 2-thiolation of cytidine in position 32 of tRNA, to form 2-thiocytidine (s(2)C32). The sulfur atoms are provided by the cysteine/cysteine desulfurase (IscS) system. This is tRNA-cytidine(32) 2-sulfurtransferase from Coxiella burnetii (strain RSA 493 / Nine Mile phase I).